Consider the following 369-residue polypeptide: GTPase Obg (369 aa).

The Obg domain occupies 1–159; the sequence is MKFIDEARIE…RMLKLELKVL (159 aa). The disordered stretch occupies residues 128–147; the sequence is LHFKSSTNRAPRQKTDGKPG. In terms of domain architecture, OBG-type G spans 160–334; that stretch reads ADVGLLGMPN…LCYAIYDYLA (175 aa). GTP-binding positions include 166 to 173, 191 to 195, 213 to 216, 284 to 287, and 315 to 317; these read GMPNAGKS, FTTLA, DIPG, NKLD, and SAL. Mg(2+) contacts are provided by Ser173 and Thr193.

Belongs to the TRAFAC class OBG-HflX-like GTPase superfamily. OBG GTPase family. In terms of assembly, monomer. Requires Mg(2+) as cofactor.

It is found in the cytoplasm. Its function is as follows. An essential GTPase which binds GTP, GDP and possibly (p)ppGpp with moderate affinity, with high nucleotide exchange rates and a fairly low GTP hydrolysis rate. Plays a role in control of the cell cycle, stress response, ribosome biogenesis and in those bacteria that undergo differentiation, in morphogenesis control. This Burkholderia multivorans (strain ATCC 17616 / 249) protein is GTPase Obg.